The chain runs to 139 residues: Large ribosomal subunit protein uL16 (139 aa).

Belongs to the universal ribosomal protein uL16 family. Part of the 50S ribosomal subunit.

Binds 23S rRNA and is also seen to make contacts with the A and possibly P site tRNAs. This Mycoplasma pneumoniae (strain ATCC 29342 / M129 / Subtype 1) (Mycoplasmoides pneumoniae) protein is Large ribosomal subunit protein uL16.